We begin with the raw amino-acid sequence, 104 residues long: MSSVPASAYLTLAIILFCIGLFGALTKRNTVIVLVCIELMLNAANLNLVAFSKLGLFPNLTGQIFSLFTMSVAAAEAAVGLAILIALYRNRPTVHVDEMDTLKG.

Helical transmembrane passes span 4 to 24 (VPAS…LFGA), 31 to 51 (VIVL…LVAF), and 67 to 87 (LFTM…LIAL).

The protein belongs to the complex I subunit 4L family. In terms of assembly, NDH-1 is composed of 14 different subunits. Subunits NuoA, H, J, K, L, M, N constitute the membrane sector of the complex.

It is found in the cell membrane. The enzyme catalyses a quinone + NADH + 5 H(+)(in) = a quinol + NAD(+) + 4 H(+)(out). NDH-1 shuttles electrons from NADH, via FMN and iron-sulfur (Fe-S) centers, to quinones in the respiratory chain. The immediate electron acceptor for the enzyme in this species is believed to be a menaquinone. Couples the redox reaction to proton translocation (for every two electrons transferred, four hydrogen ions are translocated across the cytoplasmic membrane), and thus conserves the redox energy in a proton gradient. This chain is NADH-quinone oxidoreductase subunit K, found in Bacillus mycoides (strain KBAB4) (Bacillus weihenstephanensis).